The primary structure comprises 149 residues: MSKTLSFKTYSAKPAEVDRKWYVVDAEGQVLGRMASEIAKVLRGKHKPQFTPHIDTGDFIVVTNAEKVALTGKKEEQKSYFSHSQYPGGVKIDHVKDLLKKRPERIIENAVWGMLPHNNLGRQLFRKLKVYAGSEHPHASQAPVEMKVN.

The protein belongs to the universal ribosomal protein uL13 family. Part of the 50S ribosomal subunit.

Its function is as follows. This protein is one of the early assembly proteins of the 50S ribosomal subunit, although it is not seen to bind rRNA by itself. It is important during the early stages of 50S assembly. This chain is Large ribosomal subunit protein uL13, found in Pelodictyon phaeoclathratiforme (strain DSM 5477 / BU-1).